Reading from the N-terminus, the 396-residue chain is Elongation factor Tu (396 aa).

One can recognise a tr-type G domain in the interval 10–206 (KPHVNIGTIG…AVDESVPDPV (197 aa)). A G1 region spans residues 19 to 26 (GHVDHGKT). 19 to 26 (GHVDHGKT) is a GTP binding site. Threonine 26 contacts Mg(2+). Residues 62-66 (GITIN) are G2. The interval 83–86 (DAPG) is G3. GTP contacts are provided by residues 83–87 (DAPGH) and 138–141 (NKAD). A G4 region spans residues 138–141 (NKAD). Positions 176-178 (SGL) are G5.

It belongs to the TRAFAC class translation factor GTPase superfamily. Classic translation factor GTPase family. EF-Tu/EF-1A subfamily. In terms of assembly, monomer.

It is found in the cytoplasm. The enzyme catalyses GTP + H2O = GDP + phosphate + H(+). Its function is as follows. GTP hydrolase that promotes the GTP-dependent binding of aminoacyl-tRNA to the A-site of ribosomes during protein biosynthesis. In Arthrobacter sp. (strain FB24), this protein is Elongation factor Tu.